The primary structure comprises 489 residues: Lysine--tRNA ligase (489 aa).

Residues E399 and E406 each coordinate Mg(2+).

This sequence belongs to the class-II aminoacyl-tRNA synthetase family. In terms of assembly, homodimer. Requires Mg(2+) as cofactor.

The protein localises to the cytoplasm. It carries out the reaction tRNA(Lys) + L-lysine + ATP = L-lysyl-tRNA(Lys) + AMP + diphosphate. The sequence is that of Lysine--tRNA ligase from Malacoplasma penetrans (strain HF-2) (Mycoplasma penetrans).